A 779-amino-acid chain; its full sequence is Lysosome membrane protein 2-A (779 aa).

The Cytoplasmic portion of the chain corresponds to 1–17; that stretch reads MVKRGCCHRKMVNHKGC. A helical transmembrane segment spans residues 18-38; that stretch reads LVSGIFLAVIGAVLFILAFAL. Over 39-732 the chain is Lumenal; the sequence is LPHLINQTTQ…LLNSQFKLIK (694 aa). Residues Asn44, Asn86, Asn95, Asn114, Asn117, Asn201, Asn239, Asn262, Asn266, Asn277, Asn369, Asn410, Asn440, Asn508, Asn543, Asn601, Asn619, Asn651, and Asn693 are each glycosylated (N-linked (GlcNAc...) asparagine). A helical membrane pass occupies residues 733–753; that stretch reads ILGFVPVIVVSIIGGIILIAG. The Cytoplasmic segment spans residues 754 to 779; that stretch reads ISMFAFGFKKLRQQKQQGYQAIINNE. The Tyrosine-type lysosomal sorting signal motif lies at 771 to 774; it reads GYQA.

It belongs to the CD36 family. Post-translationally, heavily glycosylated.

The protein localises to the lysosome membrane. Its function is as follows. May act as a lysosomal receptor. May be involved in macropinocytosis and fluid phase exocytosis. Binds to the anionic phospholipid phosphoinositol 4,5-bisphosphate, but not to phosphatidylcholine and only weakly to phosphatidylserine. This chain is Lysosome membrane protein 2-A (lmpA), found in Dictyostelium discoideum (Social amoeba).